Reading from the N-terminus, the 509-residue chain is Photosystem II CP47 reaction center protein (509 aa).

6 helical membrane-spanning segments follow: residues 21–36 (AVHMMHTALVAGWAGS), 101–115 (IVFSGLCFLAAIWHW), 140–156 (GIHLFLSGVACFGFGAF), 203–218 (IAAGTLGILAGLFHLS), 237–253 (VLSSSSIAAVFFAAFVV), and 458–473 (SFALLFFFGHIWHGSR).

This sequence belongs to the PsbB/PsbC family. PsbB subfamily. PSII is composed of 1 copy each of membrane proteins PsbA, PsbB, PsbC, PsbD, PsbE, PsbF, PsbH, PsbI, PsbJ, PsbK, PsbL, PsbM, PsbT, PsbX, PsbY, PsbZ, Psb30/Ycf12, at least 3 peripheral proteins of the oxygen-evolving complex and a large number of cofactors. It forms dimeric complexes. Binds multiple chlorophylls. PSII binds additional chlorophylls, carotenoids and specific lipids. serves as cofactor.

Its subcellular location is the plastid. It is found in the chloroplast thylakoid membrane. One of the components of the core complex of photosystem II (PSII). It binds chlorophyll and helps catalyze the primary light-induced photochemical processes of PSII. PSII is a light-driven water:plastoquinone oxidoreductase, using light energy to abstract electrons from H(2)O, generating O(2) and a proton gradient subsequently used for ATP formation. In Populus deltoides (Eastern poplar), this protein is Photosystem II CP47 reaction center protein.